The chain runs to 295 residues: uncharacterized protein (295 aa).

A Resolvase/invertase-type recombinase catalytic domain is found at 151–290; sequence RTAVCARLSS…RAVAAAARAG (140 aa). S159 (O-(5'-phospho-DNA)-serine intermediate) is an active-site residue.

This is an uncharacterized protein from Mycobacterium bovis (strain ATCC BAA-935 / AF2122/97).